We begin with the raw amino-acid sequence, 891 residues long: Shieldin complex subunit 2 (891 aa).

The tract at residues 1 to 61 (MSQGSQVHIF…AGDQEFKNLE (61 aa)) is sufficient for interaction with SHLD3 and MAD2L2. Positions 1 to 542 (MSQGSQVHIF…TYVSTKHSYL (542 aa)) are interaction with ASTE1. Disordered regions lie at residues 184-222 (MSTG…KASD), 260-294 (NMEA…NEQS), and 333-357 (NEEN…WSCK). Positions 192–222 (PTGHRERQSQESFSDTRCEPQSEGAVRKASD) are enriched in basic and acidic residues. 2 stretches are compositionally biased toward polar residues: residues 260 to 271 (NMEAEPTGSQGV) and 342 to 354 (LCSS…NRSW). Residues 695–866 (KYSGVVLIKA…QQDFSLLDFC (172 aa)) form a mediates interaction with SHLD1 region.

This sequence belongs to the SHLD2 family. As to quaternary structure, component of the shieldin complex, consisting of SHLD1, SHLD2, SHLD3 and MAD2L2/REV7. Within the complex, SHLD2 forms a scaffold which interacts with a SHLD3-MAD2L2 subcomplex via its N-terminus, and with SHLD1 via its C-terminus. Interacts with TP53BP1. Interacts with RIF1. Interacts with ASTE1.

The protein resides in the chromosome. Functionally, component of the shieldin complex, which plays an important role in repair of DNA double-stranded breaks (DSBs). During G1 and S phase of the cell cycle, the complex functions downstream of TP53BP1 to promote non-homologous end joining (NHEJ) and suppress DNA end resection. Mediates various NHEJ-dependent processes including immunoglobulin class-switch recombination, and fusion of unprotected telomeres. In Mus musculus (Mouse), this protein is Shieldin complex subunit 2.